The following is a 225-amino-acid chain: Elongation factor 1-beta (225 aa).

The GST C-terminal domain occupies 2–84; the sequence is GFGDLKSPAG…ALGKYGPADV (83 aa). Lysine 7 is subject to N6-acetyllysine. Residues serine 8 and serine 42 each carry the phosphoserine modification. The segment at 78-115 is disordered; that stretch reads KYGPADVEDTTGSGATDSKDDDDIDLFGSDDEEESEEA. Phosphothreonine occurs at positions 88 and 93. Residues serine 95 and serine 106 each carry the phosphoserine modification. Positions 96–113 are enriched in acidic residues; that stretch reads KDDDDIDLFGSDDEEESE. A Glycyl lysine isopeptide (Lys-Gly) (interchain with G-Cter in SUMO2) cross-link involves residue lysine 147. At serine 174 the chain carries Phosphoserine.

The protein belongs to the EF-1-beta/EF-1-delta family. As to quaternary structure, EF-1 is composed of 4 subunits: alpha, beta (alpha subunit of the eEF1B subcomplex), delta (beta subunit of the eEF1B subcomplex), and gamma (gamma subunit of the eEF1B subcomplex). Interacts with elongation factor EEF1A1. Post-translationally, phosphorylation affects the GDP/GTP exchange rate.

In terms of biological role, catalytic subunit of the guanine nucleotide exchange factor (GEF) (eEF1B subcomplex) of the eukaryotic elongation factor 1 complex (eEF1). Stimulates the exchange of GDP for GTP on elongation factor 1A (eEF1A), probably by displacing GDP from the nucleotide binding pocket in eEF1A. The polypeptide is Elongation factor 1-beta (EEF1B2) (Homo sapiens (Human)).